The following is a 344-amino-acid chain: Phenylalanine--tRNA ligase alpha subunit (344 aa).

Glu-256 serves as a coordination point for Mg(2+).

The protein belongs to the class-II aminoacyl-tRNA synthetase family. Phe-tRNA synthetase alpha subunit type 1 subfamily. Tetramer of two alpha and two beta subunits. Requires Mg(2+) as cofactor.

The protein localises to the cytoplasm. It carries out the reaction tRNA(Phe) + L-phenylalanine + ATP = L-phenylalanyl-tRNA(Phe) + AMP + diphosphate + H(+). The polypeptide is Phenylalanine--tRNA ligase alpha subunit (Oceanobacillus iheyensis (strain DSM 14371 / CIP 107618 / JCM 11309 / KCTC 3954 / HTE831)).